The chain runs to 107 residues: uncharacterized protein (107 aa).

The N-terminal stretch at 1–34 (MRLQWPKFITFLSTGSCCLLFLLLPCSFFPLPTA) is a signal peptide.

This is an uncharacterized protein from Saccharomyces cerevisiae (strain ATCC 204508 / S288c) (Baker's yeast).